The chain runs to 236 residues: MNIKDIGVIISKKPLKENTFIIRVFTKNHGLYSGVIKASSKKNKFIYQEGNIVDFLWQARLHEHIGIAKCELIKSYTGYFIINKAKLYAFNSVKFLIQELFHEREEHSIFFAFLINYLDNLSKNFCFRDYINFELNLLAETGYKIDLTKCCVSHVTTDLTYVSPKSARALSYKVGKPYRDKLLILPKFLLSEDSKITLEEKKQALTLTNYFFNRYLFHNNRQVEARKEFIEYITNI.

Belongs to the RecO family.

Functionally, involved in DNA repair and RecF pathway recombination. The sequence is that of DNA repair protein RecO from Rickettsia typhi (strain ATCC VR-144 / Wilmington).